We begin with the raw amino-acid sequence, 305 residues long: Aquaporin NIP6-1 (305 aa).

The disordered stretch occupies residues 1–30 (MDHEEIPSTPSTPATTPGTPGAPLFGGFEG). Positions 7-23 (PSTPSTPATTPGTPGAP) are enriched in low complexity. A run of 2 helical transmembrane segments spans residues 82–102 (LGAEFVGTLILIFAGTATAIV) and 111–131 (TLIGCAASAGLAVMIVILSTG). Residues 139–141 (NPA) carry the NPA 1 motif. Transmembrane regions (helical) follow at residues 159–179 (VYIGAQVMASVSAAFALKAVF), 194–214 (LSQAFALEFIISFNLMFVVTA), and 221–241 (AVGELAGIAVGATVMLNILIA). Positions 250–252 (NPV) match the NPA 2 motif. The chain crosses the membrane as a helical span at residues 267 to 287 (IWVYLTAPILGALIGAGTYTI). Serine 302 is modified (phosphoserine).

The protein belongs to the MIP/aquaporin (TC 1.A.8) family. NIP (TC 1.A.8.12) subfamily. In terms of tissue distribution, expressed in roots.

The protein resides in the membrane. Functionally, transports glycerol, urea and formamide, in Xenopus laevis oocytes. Very low water transport activity. The sequence is that of Aquaporin NIP6-1 (NIP6-1) from Arabidopsis thaliana (Mouse-ear cress).